Reading from the N-terminus, the 322-residue chain is Corticotropin-releasing factor-binding protein (322 aa).

Residues 1–24 (MSPNFKLQCHFILIFLTALRGESR) form the signal peptide. 5 cysteine pairs are disulfide-bonded: Cys-60–Cys-81, Cys-104–Cys-141, Cys-183–Cys-205, Cys-237–Cys-264, and Cys-277–Cys-318. Residue Asn-204 is glycosylated (N-linked (GlcNAc...) asparagine).

It belongs to the CRF-binding protein family.

The protein resides in the secreted. In terms of biological role, binds CRF and inactivates it. May prevent inappropriate pituitary-adrenal stimulation in pregnancy. In Homo sapiens (Human), this protein is Corticotropin-releasing factor-binding protein (CRHBP).